We begin with the raw amino-acid sequence, 259 residues long: Putative electron transfer flavoprotein subunit YgcR (259 aa).

The protein belongs to the ETF beta-subunit/FixA family. As to quaternary structure, ygcQ and YgcR form a heterodimer.

Its function is as follows. May play a role in a redox process. The protein is Putative electron transfer flavoprotein subunit YgcR (ygcR) of Escherichia coli (strain K12).